A 501-amino-acid polypeptide reads, in one-letter code: Cytochrome P450 71B23 (501 aa).

A helical transmembrane segment spans residues 1–21 (MSIFLCFLLLLLLLLVTIIFT). Heme is bound at residue Cys443.

Belongs to the cytochrome P450 family. Heme is required as a cofactor.

It localises to the membrane. This chain is Cytochrome P450 71B23 (CYP71B23), found in Arabidopsis thaliana (Mouse-ear cress).